Consider the following 63-residue polypeptide: Large ribosomal subunit protein eL37 (63 aa).

Zn(2+) is bound by residues C20, C23, C35, and C38. A C4-type zinc finger spans residues 20-38 (CRRCGRHSFNVRKGYCVAC).

This sequence belongs to the eukaryotic ribosomal protein eL37 family. Requires Zn(2+) as cofactor.

In terms of biological role, binds to the 23S rRNA. The chain is Large ribosomal subunit protein eL37 from Ignicoccus hospitalis (strain KIN4/I / DSM 18386 / JCM 14125).